Reading from the N-terminus, the 416-residue chain is Nucleoside transporter 1 (416 aa).

Residues 1 to 26 (MSISKESSKTMIDIEKKGGEGKDGKG) show a composition bias toward basic and acidic residues. Residues 1–28 (MSISKESSKTMIDIEKKGGEGKDGKGGS) form a disordered region. Topologically, residues 1-35 (MSISKESSKTMIDIEKKGGEGKDGKGGSKMTKNEQ) are cytoplasmic. Residues 36–58 (FLLPFTFILIGLSSLNVWNTALG) traverse the membrane as a helical segment. At 59–64 (LNINFK) the chain is on the extracellular side. The helical transmembrane segment at 65–83 (YNTFQITGLVCSSIIALFV) threads the bilayer. At 84–87 (KVPK) the chain is on the cytoplasmic side. The helical transmembrane segment at 88-107 (MLLPFALGGLAMLCAGFQIA) threads the bilayer. Residues 108 to 119 (HQCFTFEQFDTY) are Extracellular-facing. Residues 120-139 (CLIAFIVIGIMAGLAQTIAF) form a helical membrane-spanning segment. At 140–148 (SVGTTMEEN) the chain is on the cytoplasmic side. The helical transmembrane segment at 149–171 (MGGYMSAGIGISGVFIFIINLLL) threads the bilayer. Over 172 to 187 (DQIVPDQKKFNVNEAK) the chain is Extracellular. The chain crosses the membrane as a helical span at residues 188–210 (LLYLFLICELCLVLAIIFSVCNL). Topologically, residues 211-241 (ELSSSKTSKEEEYSDKEQGLSYLELLKDSYK) are cytoplasmic. The helical transmembrane segment at 242 to 261 (AILAMFLVNWLSLQLFPGVG) threads the bilayer. Over 262 to 273 (HKKWQESHNISD) the chain is Extracellular. Residues 274–292 (YNVTLIVGMFQVFDFVSRY) form a helical membrane-spanning segment. Residues 293-311 (PPNLSHMKIFKWFTFSLNK) are Cytoplasmic-facing. A helical transmembrane segment spans residues 312-331 (LLLLNFLRLLFIPWFVINAA). Residues 332 to 343 (CDLPIFTNIVQQ) are Extracellular-facing. Residues 344–366 (CVCMAMLAFTNGWFNTVPFLVFV) traverse the membrane as a helical segment. Topologically, residues 367 to 380 (QELKKAKKKKDIET) are cytoplasmic. The chain crosses the membrane as a helical span at residues 381 to 403 (ISTFLVVAMFVGLFMGIWTTYIY). Residues 404–416 (DFFPIVIKRYVVP) are Extracellular-facing.

This sequence belongs to the SLC29A/ENT transporter (TC 2.A.57) family.

It is found in the cell membrane. It carries out the reaction inosine(in) = inosine(out). The catalysed reaction is adenosine(in) = adenosine(out). It catalyses the reaction hypoxanthine(out) = hypoxanthine(in). The enzyme catalyses guanosine(in) = guanosine(out). It carries out the reaction guanine(out) = guanine(in). The catalysed reaction is thymidine(in) = thymidine(out). It catalyses the reaction uridine(out) = uridine(in). The enzyme catalyses uracil(in) = uracil(out). It carries out the reaction thymine(out) = thymine(in). The catalysed reaction is adenine(out) = adenine(in). It catalyses the reaction cytosine(out) = cytosine(in). The enzyme catalyses xanthine(out) = xanthine(in). Its function is as follows. Nucleoside and nucleobase transporter with a broad substrate specificity. This chain is Nucleoside transporter 1, found in Plasmodium vivax (strain Salvador I).